Reading from the N-terminus, the 518-residue chain is Glutamate--cysteine ligase (518 aa).

Belongs to the glutamate--cysteine ligase type 1 family. Type 1 subfamily.

It catalyses the reaction L-cysteine + L-glutamate + ATP = gamma-L-glutamyl-L-cysteine + ADP + phosphate + H(+). Its pathway is sulfur metabolism; glutathione biosynthesis; glutathione from L-cysteine and L-glutamate: step 1/2. This chain is Glutamate--cysteine ligase, found in Klebsiella pneumoniae (strain 342).